Here is a 393-residue protein sequence, read N- to C-terminus: MPVEEFERELNERREQGLYVTIRKIGSPQGAWIIVDGKKVLNLSSNNYLGFANHPRLKEAAKKGIDDYGAGPAAVRTIAGDQLPQEKLEEMLAEFKGAEAAVLYQSGFCANLGTIPALVGEGDAIFSDELNHASIIDGCRLSRAKIIRYPHLNVQTLEELLKQERQNYKKAMIITDGVFSMDGDIAPMDKLADLADKYQCILYVDDAHGEGVLGDSGRGIVDYFGLQGRVDVEIGTLSKAFGVVGGFAAGSKLLAELLKQKARPLLFSSAPTAADVYASMEAVRILQESDELVKKLWENANYFKEHMRKAGFDLGNSQTPITPVMIGDEITTQEFSKKLFERNVFAQAISYPTVPKGKARMRVMISATHSRDDLDFAVEQFTAVGKELGVIQS.

107 to 108 (GF) serves as a coordination point for pyridoxal 5'-phosphate. His-132 is a substrate binding site. Residues Ser-180, 205-208 (DDAH), and 236-239 (TLSK) each bind pyridoxal 5'-phosphate. Lys-239 is modified (N6-(pyridoxal phosphate)lysine). Thr-353 contributes to the substrate binding site.

This sequence belongs to the class-II pyridoxal-phosphate-dependent aminotransferase family. BioF subfamily. Homodimer. Requires pyridoxal 5'-phosphate as cofactor.

It carries out the reaction 6-carboxyhexanoyl-[ACP] + L-alanine + H(+) = (8S)-8-amino-7-oxononanoate + holo-[ACP] + CO2. The protein operates within cofactor biosynthesis; biotin biosynthesis. Its function is as follows. Catalyzes the decarboxylative condensation of pimeloyl-[acyl-carrier protein] and L-alanine to produce 8-amino-7-oxononanoate (AON), [acyl-carrier protein], and carbon dioxide. The chain is 8-amino-7-oxononanoate synthase from Coprothermobacter proteolyticus (strain ATCC 35245 / DSM 5265 / OCM 4 / BT).